We begin with the raw amino-acid sequence, 198 residues long: Superoxide dismutase [Fe] (198 aa).

Fe cation-binding residues include H27, H74, D158, and H162.

This sequence belongs to the iron/manganese superoxide dismutase family. In terms of assembly, homodimer. The cofactor is Fe cation.

The protein localises to the cytoplasm. It carries out the reaction 2 superoxide + 2 H(+) = H2O2 + O2. Destroys superoxide anion radicals which are normally produced within the cells and which are toxic to biological systems. The sequence is that of Superoxide dismutase [Fe] (SODB) from Plasmodium malariae.